The primary structure comprises 950 residues: Leucine--tRNA ligase 2 (950 aa).

The short motif at 47 to 57 is the 'HIGH' region element; it reads PYPNSPFHLGH. The 'KMSKS' region motif lies at 631–635; that stretch reads KMSKS. Lys634 lines the ATP pocket.

This sequence belongs to the class-I aminoacyl-tRNA synthetase family.

Its subcellular location is the cytoplasm. The enzyme catalyses tRNA(Leu) + L-leucine + ATP = L-leucyl-tRNA(Leu) + AMP + diphosphate. In Metallosphaera sedula (strain ATCC 51363 / DSM 5348 / JCM 9185 / NBRC 15509 / TH2), this protein is Leucine--tRNA ligase 2.